The following is a 614-amino-acid chain: Maltose permease MAL61 (614 aa).

Residues 1–48 are disordered; the sequence is MKGLSSLINRKKDRNDSHLDEIENGVNATEFNSIEMEEQGKKSDFDLS. Over 1-108 the chain is Cytoplasmic; that stretch reads MKGLSSLINR…AAAWSLLVST (108 aa). Residues 38 to 48 show a composition bias toward basic and acidic residues; the sequence is EQGKKSDFDLS. A helical transmembrane segment spans residues 109-129; the sequence is TLIQEGYDTAILGAFYALPVF. The Extracellular portion of the chain corresponds to 130–144; the sequence is QKKYGSLNSNTGDYE. The chain crosses the membrane as a helical span at residues 145–165; the sequence is ISVSWQIGLCLCYMAGEIVGL. The Cytoplasmic segment spans residues 166 to 180; sequence QVTGPSVDYMGNRYT. Residues 181-201 form a helical membrane-spanning segment; it reads LIMALFFLAAFIFILYFCKSL. Residue G202 is a topological domain, extracellular. The chain crosses the membrane as a helical span at residues 203-223; it reads MIAVGQALCGMPWGCFQCLTV. Residues 224–236 lie on the Cytoplasmic side of the membrane; sequence SYASEICPLALRY. The chain crosses the membrane as a helical span at residues 237–257; the sequence is YLTTYSNLCWTFGQLFAAGIM. Residues 258–272 lie on the Extracellular side of the membrane; that stretch reads KNSQNKYANSELGYK. Residues 273-293 form a helical membrane-spanning segment; the sequence is LPFALQWIWPLPLAVGIFLAP. At 294–364 the chain is on the cytoplasmic side; that stretch reads ESPWWLVKKG…KDGINRRRTR (71 aa). Residues 365 to 385 form a helical membrane-spanning segment; the sequence is IACLCWIGQCSCGASLIGYST. The Extracellular segment spans residues 386–398; sequence YFYEKAGVSTDTA. The helical transmembrane segment at 399-419 threads the bilayer; sequence FTFSIIQYCLGIAATFVSWWA. Residues 420–427 lie on the Cytoplasmic side of the membrane; that stretch reads SKYCGRFD. Residues 428 to 448 traverse the membrane as a helical segment; sequence LYAFGLAFQAIMFFIIGGLGC. Residues 449-460 lie on the Extracellular side of the membrane; the sequence is SDTHGAKMGSGA. A helical transmembrane segment spans residues 461-481; sequence LLMVVAFFYNLGIAPVVFCLV. Over 482-493 the chain is Cytoplasmic; sequence SEMPSSRLRTKT. The chain crosses the membrane as a helical span at residues 494-514; sequence IILARNAYNVIQVVVTVLIMY. Residues 515–526 lie on the Extracellular side of the membrane; it reads QLNSEKWNWGAK. A helical transmembrane segment spans residues 527–547; that stretch reads SGFFWGGFCLATLAWAVVDLP. The Cytoplasmic segment spans residues 548-614; that stretch reads ETAGRTFIEI…GRSTPSVVNK (67 aa). Positions 594–614 are disordered; the sequence is KEDLETSVVDEGRSTPSVVNK.

It belongs to the major facilitator superfamily. Sugar transporter (TC 2.A.1.1) family.

Its subcellular location is the membrane. Its function is as follows. Transporter for maltose. In Saccharomyces cerevisiae (Baker's yeast), this protein is Maltose permease MAL61 (MAL61).